The primary structure comprises 304 residues: Homoserine kinase (304 aa).

Residue 86 to 96 coordinates ATP; sequence PLARGLGSSAA.

The protein belongs to the GHMP kinase family. Homoserine kinase subfamily.

It localises to the cytoplasm. The enzyme catalyses L-homoserine + ATP = O-phospho-L-homoserine + ADP + H(+). Its pathway is amino-acid biosynthesis; L-threonine biosynthesis; L-threonine from L-aspartate: step 4/5. Its function is as follows. Catalyzes the ATP-dependent phosphorylation of L-homoserine to L-homoserine phosphate. This is Homoserine kinase from Carboxydothermus hydrogenoformans (strain ATCC BAA-161 / DSM 6008 / Z-2901).